Here is a 127-residue protein sequence, read N- to C-terminus: Calcitonin gene-related peptide 2 (127 aa).

The first 25 residues, 1 to 25, serve as a signal peptide directing secretion; it reads MGFRKFSPFLALSILVLYQAGSLQA. The propeptide occupies 26 to 79; sequence APFRSALESSPDPATLSKEDARLLLAALVQDYVQMKASELKQEQETQGSSSAAQ. The cysteines at positions 83 and 88 are disulfide-linked. F118 bears the Phenylalanine amide mark. The propeptide occupies 124–127; sequence DLQA.

This sequence belongs to the calcitonin family. Expressed in spinal cord, pituitary and thalamus.

It localises to the secreted. In terms of biological role, CALCB/CGRP2 is a peptide hormone that induces vasodilation mediated by the CALCRL-RAMP1 receptor complex. Dilates a variety of vessels including the coronary, cerebral and systemic vasculature. Its abundance in the CNS also points toward a neurotransmitter or neuromodulator role. The protein is Calcitonin gene-related peptide 2 of Homo sapiens (Human).